The following is a 150-amino-acid chain: Non-specific lipid transfer protein GPI-anchored 7 (150 aa).

The signal sequence occupies residues 1–25 (MTKTMMIFAAAMTVMALLLVPTIEA). 4 disulfide bridges follow: C29–C66, C36–C50, C51–C92, and C64–C101. Residues N41, N79, and N93 are each glycosylated (N-linked (GlcNAc...) asparagine). The interval 103–125 (AKGAPSPKASLPPPAPAGNTKKD) is disordered. D125 is lipidated: GPI-anchor amidated aspartate. A propeptide spans 126–150 (AGAGNKLAGYGVTTVILSLISSIFF) (removed in mature form).

The protein belongs to the plant LTP family. Up-regulated in the epidermis of stems.

The protein resides in the cell membrane. In terms of biological role, probable lipid transfer protein. This Arabidopsis thaliana (Mouse-ear cress) protein is Non-specific lipid transfer protein GPI-anchored 7.